The primary structure comprises 334 residues: N-acetyl-gamma-glutamyl-phosphate reductase (334 aa).

Residue Cys154 is part of the active site.

This sequence belongs to the NAGSA dehydrogenase family. Type 1 subfamily.

The protein resides in the cytoplasm. It carries out the reaction N-acetyl-L-glutamate 5-semialdehyde + phosphate + NADP(+) = N-acetyl-L-glutamyl 5-phosphate + NADPH + H(+). It functions in the pathway amino-acid biosynthesis; L-arginine biosynthesis; N(2)-acetyl-L-ornithine from L-glutamate: step 3/4. In terms of biological role, catalyzes the NADPH-dependent reduction of N-acetyl-5-glutamyl phosphate to yield N-acetyl-L-glutamate 5-semialdehyde. The sequence is that of N-acetyl-gamma-glutamyl-phosphate reductase from Escherichia coli O157:H7.